The following is a 173-amino-acid chain: Large ribosomal subunit protein uL18 (173 aa).

Belongs to the universal ribosomal protein uL18 family. As to quaternary structure, part of the 50S ribosomal subunit. Contacts the 5S and 23S rRNAs.

In terms of biological role, this is one of the proteins that bind and probably mediate the attachment of the 5S RNA into the large ribosomal subunit, where it forms part of the central protuberance. The protein is Large ribosomal subunit protein uL18 of Methanococcoides burtonii (strain DSM 6242 / NBRC 107633 / OCM 468 / ACE-M).